The sequence spans 399 residues: Delta(12) acyl-lipid conjugase (11E,13E-forming) (399 aa).

The disordered stretch occupies residues 11 to 30 (RNGGGPKKKMGPGQGLGPGE). The next 2 helical transmembrane spans lie at 61–81 (FSYL…ADTY) and 93–113 (LAWP…WGIA). Residues 114 to 118 (HDCGH) carry the Histidine box-1 motif. A helical membrane pass occupies residues 126 to 146 (LVDDVVGFLIHSLVFVPYFSF). The short motif at 150–154 (HRRHH) is the Histidine box-2 element. 3 consecutive transmembrane segments (helical) span residues 188–208 (VFII…FNIS), 232–252 (VLVH…YRIA), and 258–278 (GWLI…VVLI). The Histidine box-3 motif lies at 325–329 (HVVHH).

Belongs to the fatty acid desaturase type 1 family. In terms of tissue distribution, expressed in developing seeds, but not in leaves.

The protein localises to the membrane. The enzyme catalyses a (9Z,12Z)-octadecadienoyl-containing glycerolipid + 2 Fe(II)-[cytochrome b5] + O2 + 2 H(+) = a (9Z,11E,13E)-octadecatrienoyl-containing glycerolipid + 2 Fe(III)-[cytochrome b5] + 2 H2O. It catalyses the reaction (9Z,12Z,15Z)-octadecatrienoyl-containing glycerolipid + 2 Fe(II)-[cytochrome b5] + O2 + 2 H(+) = a (9Z,11E,13E,15Z)-octadecatetraenoyl-containing glycerolipid + 2 Fe(III)-[cytochrome b5] + 2 H2O. Its pathway is lipid metabolism; polyunsaturated fatty acid biosynthesis. In terms of biological role, converts linoleic acid to alpha-eleostearic acid (18:3(9Z,11E,13E)) and alpha-linolenic acid to alpha-parinaric acid (18:4(9Z,11E, 13E, 15Z)). Converts a single cis double bond at carbon 12 to two conjugated trans bonds at positions 11 and 13. The sequence is that of Delta(12) acyl-lipid conjugase (11E,13E-forming) from Momordica charantia (Bitter gourd).